The following is a 178-amino-acid chain: Large ribosomal subunit protein uL6 (178 aa).

The protein belongs to the universal ribosomal protein uL6 family. Part of the 50S ribosomal subunit.

Functionally, this protein binds to the 23S rRNA, and is important in its secondary structure. It is located near the subunit interface in the base of the L7/L12 stalk, and near the tRNA binding site of the peptidyltransferase center. In Methanobrevibacter smithii (strain ATCC 35061 / DSM 861 / OCM 144 / PS), this protein is Large ribosomal subunit protein uL6.